A 481-amino-acid chain; its full sequence is Aspartyl/glutamyl-tRNA(Asn/Gln) amidotransferase subunit B (481 aa).

This sequence belongs to the GatB/GatE family. GatB subfamily. In terms of assembly, heterotrimer of A, B and C subunits.

The enzyme catalyses L-glutamyl-tRNA(Gln) + L-glutamine + ATP + H2O = L-glutaminyl-tRNA(Gln) + L-glutamate + ADP + phosphate + H(+). It carries out the reaction L-aspartyl-tRNA(Asn) + L-glutamine + ATP + H2O = L-asparaginyl-tRNA(Asn) + L-glutamate + ADP + phosphate + 2 H(+). Its function is as follows. Allows the formation of correctly charged Asn-tRNA(Asn) or Gln-tRNA(Gln) through the transamidation of misacylated Asp-tRNA(Asn) or Glu-tRNA(Gln) in organisms which lack either or both of asparaginyl-tRNA or glutaminyl-tRNA synthetases. The reaction takes place in the presence of glutamine and ATP through an activated phospho-Asp-tRNA(Asn) or phospho-Glu-tRNA(Gln). This is Aspartyl/glutamyl-tRNA(Asn/Gln) amidotransferase subunit B from Pseudomonas syringae pv. syringae (strain B728a).